Consider the following 152-residue polypeptide: UPF0266 membrane protein YobD (152 aa).

3 consecutive transmembrane segments (helical) span residues 6 to 26, 45 to 65, and 67 to 87; these read LVLI…QFIM, IDSV…VTNH, and ALIT…IFWI.

This sequence belongs to the UPF0266 family.

The protein resides in the cell inner membrane. This is UPF0266 membrane protein YobD from Escherichia coli O157:H7 (strain EC4115 / EHEC).